A 173-amino-acid polypeptide reads, in one-letter code: MAAYLTNRVLMSSLMFFVMTGSLNAQVADIKAICGKAKNQSFCTSYMKSNPKTSGADLQTLANITFGSAQTSASEGFRKIQSLVKTATNPTMKKAYTSCVQHYKSAISSLNDAKQSLASGDGKGLNIKVSAAMEGPSTCEQDMADFKVDPSAVKNSGDFQNICGIVLVISNMM.

Residues 1–25 (MAAYLTNRVLMSSLMFFVMTGSLNA) form the signal peptide. A disulfide bridge links Cys34 with Cys43. N-linked (GlcNAc...) asparagine glycosylation is found at Asn39 and Asn63. Cys99 and Cys139 form a disulfide bridge.

This sequence belongs to the PMEI family. Interacts with PPME1. As to expression, highest expression in flowers. Expressed exclusively at the pollen tube tip.

The protein resides in the secreted. It is found in the extracellular space. Its subcellular location is the apoplast. Its function is as follows. Inhibits pectin methylesterase (PME) from flowers, siliques and pollen tube. This Arabidopsis thaliana (Mouse-ear cress) protein is Pectinesterase inhibitor 2.